Here is a 27-residue protein sequence, read N- to C-terminus: Pregnancy-associated glycoprotein 59 (27 aa).

This sequence belongs to the peptidase A1 family. Post-translationally, glycosylated. Placenta.

This chain is Pregnancy-associated glycoprotein 59 (PAG59), found in Capra hircus (Goat).